Consider the following 373-residue polypeptide: Septin homolog spn3 (373 aa).

In terms of domain architecture, Septin-type G spans 10–286; sequence KGIPLNLMVV…ETYRTEKLST (277 aa). Residues 20 to 27 are G1 motif; sequence GDVGLGRT. 20 to 27 is a binding site for GTP; it reads GDVGLGRT. Positions 79 to 82 are G3 motif; that stretch reads DTPH. The interval 161 to 164 is G4 motif; sequence AKAD. GTP contacts are provided by residues 162–170 and R235; that span reads KADSLTAQE. Residue S303 is modified to Phosphoserine. The stretch at 311 to 357 forms a coiled coil; that stretch reads EDRLRAIELSVQKEIEEKRRQLLAREEALRALEEKLAASTAAMANAS.

This sequence belongs to the TRAFAC class TrmE-Era-EngA-EngB-Septin-like GTPase superfamily. Septin GTPase family. As to quaternary structure, component of the septin complex composed of two copies of each spn1, spn2, spn3 and spn4.

It is found in the cytoplasm. It localises to the cell cortex. Plays a role in the cell cycle. Involved in a late stage of septum formation leading to the separation of the daughter cells. This is Septin homolog spn3 (spn3) from Schizosaccharomyces pombe (strain 972 / ATCC 24843) (Fission yeast).